The following is a 333-amino-acid chain: tRNA (guanine(37)-N(1))/4-demethylwyosine(37)-methyltransferase Taw22 (333 aa).

Residues Arg174, Phe191, 213–214, and 243–244 each bind S-adenosyl-L-methionine; these read EI and DV.

This sequence belongs to the class I-like SAM-binding methyltransferase superfamily. TRM5/TYW2 family.

It localises to the cytoplasm. The enzyme catalyses guanosine(37) in tRNA + S-adenosyl-L-methionine = N(1)-methylguanosine(37) in tRNA + S-adenosyl-L-homocysteine + H(+). The catalysed reaction is 4-demethylwyosine(37) in tRNA(Phe) + S-adenosyl-L-methionine = isowyosine(37) in tRNA(Phe) + S-adenosyl-L-homocysteine + H(+). Functionally, catalyzes both the N1-methylation of guanosine and the C7-methylation of 4-demethylwyosine (imG-14) at position 37 in tRNA(Phe). The polypeptide is tRNA (guanine(37)-N(1))/4-demethylwyosine(37)-methyltransferase Taw22 (Pyrococcus abyssi (strain GE5 / Orsay)).